The primary structure comprises 26 residues: Hainantoxin F1-31.97 (26 aa).

Intrachain disulfides connect C2/C16 and C9/C21.

The protein belongs to the neurotoxin 10 (Hwtx-1) family. 17 (Hntx-9) subfamily. In terms of tissue distribution, expressed by the venom gland.

The protein localises to the secreted. Ion channel inhibitor. The sequence is that of Hainantoxin F1-31.97 from Cyriopagopus hainanus (Chinese bird spider).